The following is a 299-amino-acid chain: MEELLPDGQIWANMDPEERMLAAATAFTHICAGQGEGDVRREAQSIQYDPYSKASVAPGKRPALPVQLQYPHVESNVPSETVSEASQRLRKPVMKRKVLRRKPDGEVLVTDESIISESESGTENDQDLWDLRQRLMNVQFQEDKESSFDVSQKFNLPHEYQGISQDQLICSLQREGMGSPAYEQDLIVASRPKSFILPKLDQLSRNRGKTDRVARYFEYKRDWDSIRLPGEDHRKELRWGVREQMLCRAEPQSKPQHIYVPNNYLVPTEKKRSALRWGVRCDLANGVIPRKLPFPLSPS.

Position 179 is a phosphoserine (serine 179).

Belongs to the HYLS1 family.

Its subcellular location is the cytoplasm. The protein resides in the cell projection. It is found in the cilium. The protein localises to the cytoskeleton. It localises to the microtubule organizing center. Its subcellular location is the centrosome. The protein resides in the centriole. Functionally, plays a role in ciliogenesis. The chain is Centriolar and ciliogenesis-associated protein HYLS1 from Homo sapiens (Human).